Here is a 227-residue protein sequence, read N- to C-terminus: Large ribosomal subunit protein uL10c (227 aa).

The N-terminal 47 residues, 1–47 (MEATFFTLPSSTSHSYPFSLKSHFNNSLTLPTHPHFKPKSKNLTIRS), are a transit peptide targeting the chloroplast.

This sequence belongs to the universal ribosomal protein uL10 family. Part of the 50S ribosomal subunit.

It is found in the plastid. The protein resides in the chloroplast. Its function is as follows. This protein binds directly to 23S ribosomal RNA. This Nicotiana tabacum (Common tobacco) protein is Large ribosomal subunit protein uL10c (RPL10).